A 1155-amino-acid chain; its full sequence is RHO1 GDP-GTP exchange protein 1 (1155 aa).

M1 is modified (N-acetylmethionine). Residues 100 to 143 are compositionally biased toward polar residues; sequence NSSPQSFTGDQISPTNKKISINDSTRQDKGNSCTTTSSPSQKRS. The segment at 100–249 is disordered; the sequence is NSSPQSFTGD…HSRSKSSPVS (150 aa). S154 and S155 each carry phosphoserine. Over residues 155-167 the composition is skewed to low complexity; sequence SPSLLSFSKNSGS. T180 is subject to Phosphothreonine. Low complexity predominate over residues 190-227; sequence LHSSFNGKHSSSSTSSLFALESLKTQNRRSSNSSNHSS. Positions 228–243 are enriched in basic residues; it reads QYRRHTNQHQRHHSRS. At S433 the chain carries Phosphoserine. The DH domain maps to 464–651; sequence KRQEAIYELF…KDLMKRIDRA (188 aa). Residues 842–1137 enclose the CNH domain; sequence TNRVNDVLIC…RMLKSYAKKI (296 aa).

Functionally, stimulates the exchange of RHO1 GDP-bound form into GTP-bound form. This is RHO1 GDP-GTP exchange protein 1 (ROM1) from Saccharomyces cerevisiae (strain ATCC 204508 / S288c) (Baker's yeast).